The following is a 144-amino-acid chain: Ig heavy chain V region M167 (144 aa).

The N-terminal stretch at Met1–Cys19 is a signal peptide. The 114-residue stretch at Glu20–Val133 folds into the Ig-like domain.

The sequence is that of Ig heavy chain V region M167 from Mus musculus (Mouse).